The following is a 500-amino-acid chain: L-arabinose isomerase (500 aa).

The Mn(2+) site is built by Glu306, Glu333, His350, and His450.

It belongs to the arabinose isomerase family. Homohexamer. Requires Mn(2+) as cofactor.

The enzyme catalyses beta-L-arabinopyranose = L-ribulose. It functions in the pathway carbohydrate degradation; L-arabinose degradation via L-ribulose; D-xylulose 5-phosphate from L-arabinose (bacterial route): step 1/3. Its function is as follows. Catalyzes the conversion of L-arabinose to L-ribulose. This chain is L-arabinose isomerase, found in Escherichia coli O7:K1 (strain IAI39 / ExPEC).